The chain runs to 203 residues: Adenosylcobalamin/alpha-ribazole phosphatase (203 aa).

The Tele-phosphohistidine intermediate role is filled by His-8. Catalysis depends on Glu-81, which acts as the Proton donor/acceptor.

This sequence belongs to the phosphoglycerate mutase family.

It catalyses the reaction adenosylcob(III)alamin 5'-phosphate + H2O = adenosylcob(III)alamin + phosphate. It carries out the reaction alpha-ribazole 5'-phosphate + H2O = alpha-ribazole + phosphate. It participates in nucleoside biosynthesis; alpha-ribazole biosynthesis; alpha-ribazole from 5,6-dimethylbenzimidazole: step 2/2. Functionally, catalyzes the conversion of adenosylcobalamin 5'-phosphate to adenosylcobalamin (vitamin B12); involved in the assembly of the nucleotide loop of cobalamin. Also catalyzes the hydrolysis of the phospho group from alpha-ribazole 5'-phosphate to form alpha-ribazole. In Escherichia coli (strain K12), this protein is Adenosylcobalamin/alpha-ribazole phosphatase (cobC).